Here is a 425-residue protein sequence, read N- to C-terminus: Dihydroorotase (425 aa).

The Zn(2+) site is built by His-61 and His-63. Substrate is bound by residues 63–65 (HLR) and Asn-95. Positions 153, 180, and 233 each coordinate Zn(2+). Asn-279 contacts substrate. Asp-306 serves as a coordination point for Zn(2+). The active site involves Asp-306. Residue His-310 participates in substrate binding.

It belongs to the metallo-dependent hydrolases superfamily. DHOase family. Class I DHOase subfamily. Requires Zn(2+) as cofactor.

The enzyme catalyses (S)-dihydroorotate + H2O = N-carbamoyl-L-aspartate + H(+). It functions in the pathway pyrimidine metabolism; UMP biosynthesis via de novo pathway; (S)-dihydroorotate from bicarbonate: step 3/3. Catalyzes the reversible cyclization of carbamoyl aspartate to dihydroorotate. The chain is Dihydroorotase from Geobacter sulfurreducens (strain ATCC 51573 / DSM 12127 / PCA).